A 342-amino-acid polypeptide reads, in one-letter code: Cystein proteinase inhibitor protein salarin (342 aa).

The N-terminal stretch at 1–19 is a signal peptide; the sequence is MKSLVLLLLVAVTVSSVVS. An N-linked (GlcNAc) asparagine glycan is attached at N153. O-linked (GlcNAc) threonine glycosylation occurs at T184.

In terms of processing, N-glycosylated, with sialylated biantennary complex-type glycans. Post-translationally, O-glycosylated, with sialylated oligosaccharides.

It localises to the cytoplasm. It is found in the vacuole. Inhibits papain and ficin (cysteine proteinases) but not trypsin (a serine proteinase). The sequence is that of Cystein proteinase inhibitor protein salarin (salarin) from Salvelinus alpinus (Arctic char).